We begin with the raw amino-acid sequence, 344 residues long: Heat-inducible transcription repressor HrcA (344 aa).

The protein belongs to the HrcA family.

In terms of biological role, negative regulator of class I heat shock genes (grpE-dnaK-dnaJ and groELS operons). Prevents heat-shock induction of these operons. This is Heat-inducible transcription repressor HrcA from Streptococcus equi subsp. zooepidemicus (strain MGCS10565).